A 152-amino-acid chain; its full sequence is Interleukin-3 (152 aa).

A signal peptide spans 1 to 19 (MSRLPVLLLLQLLVRPGLQ). N-linked (GlcNAc...) asparagine glycans are attached at residues Asn-34 and Asn-89. A disulfide bond links Cys-35 and Cys-103.

Belongs to the IL-3 family. Interacts with IL3RA. As to expression, activated T-cells, mast cells, natural killer cells.

It localises to the secreted. Functionally, cytokine secreted predominantly by activated T-lymphocytes as well as mast cells and osteoblastic cells that controls the production and differentiation of hematopoietic progenitor cells into lineage-restricted cells. Also stimulates mature basophils, eosinophils, and monocytes to become functionally activated. In addition, plays an important role in neural cell proliferation and survival. Participates as well in bone homeostasis and inhibits osteoclast differentiation by preventing NF-kappa-B nuclear translocation and activation. Mechanistically, exerts its biological effects through a receptor composed of IL3RA subunit and a signal transducing subunit IL3RB. Receptor stimulation results in the rapid activation of JAK2 kinase activity leading to STAT5-mediated transcriptional program. Alternatively, contributes to cell survival under oxidative stress in non-hematopoietic systems by activating pathways mediated by PI3K/AKT and ERK. In Homo sapiens (Human), this protein is Interleukin-3.